The sequence spans 605 residues: Isocitrate dehydrogenase kinase/phosphatase (605 aa).

ATP is bound by residues 327–333 (APGIKGL) and K348. Residue D383 is part of the active site.

It belongs to the AceK family.

The protein resides in the cytoplasm. The catalysed reaction is L-seryl-[isocitrate dehydrogenase] + ATP = O-phospho-L-seryl-[isocitrate dehydrogenase] + ADP + H(+). Functionally, bifunctional enzyme which can phosphorylate or dephosphorylate isocitrate dehydrogenase (IDH) on a specific serine residue. This is a regulatory mechanism which enables bacteria to bypass the Krebs cycle via the glyoxylate shunt in response to the source of carbon. When bacteria are grown on glucose, IDH is fully active and unphosphorylated, but when grown on acetate or ethanol, the activity of IDH declines drastically concomitant with its phosphorylation. The chain is Isocitrate dehydrogenase kinase/phosphatase from Burkholderia orbicola (strain AU 1054).